The sequence spans 118 residues: MQTLDPVDAASLRDDVPAFRPGDTLKVHVKVVEGARSRIQVFQGVVIARAGGGVRETFTIRKVSFGVGVERIFPVHSPSIDHIEVVTRGDVRRAKLYYLRSLRGKAAKIKEKRETPVG.

The protein belongs to the bacterial ribosomal protein bL19 family.

This protein is located at the 30S-50S ribosomal subunit interface and may play a role in the structure and function of the aminoacyl-tRNA binding site. The sequence is that of Large ribosomal subunit protein bL19 from Beutenbergia cavernae (strain ATCC BAA-8 / DSM 12333 / CCUG 43141 / JCM 11478 / NBRC 16432 / NCIMB 13614 / HKI 0122).